The following is a 358-amino-acid chain: Zinc transporter ZIP1 (358 aa).

Topologically, residues 1–7 (MDLLFAK) are extracellular. A helical transmembrane segment spans residues 8 to 28 (IICIGIFLVVTTFGCFIPHLM). Residues 29–53 (GLYKEKENEEKNKRVKNILSNLNCF) lie on the Cytoplasmic side of the membrane. Residues 54 to 74 (GSGFIFSIIMFHLLPETIHII) form a helical membrane-spanning segment. Topologically, residues 75–91 (SDHGNIRIFNTSDSQMK) are extracellular. A helical membrane pass occupies residues 92–112 (ILYIFFFVFIGFCMQLGLEYV). Residues 113–186 (LPVDTNICCV…GKFLEILTLQ (74 aa)) lie on the Cytoplasmic side of the membrane. A helical transmembrane segment spans residues 187–207 (SFFLTISLAIHSCIEGMIIGT). The Extracellular portion of the chain corresponds to 208–213 (STDVNY). The chain crosses the membrane as a helical span at residues 214–234 (VFISSFCILLHKWIAGVTVSL). Topologically, residues 235–246 (SLNSNNMNKTLK) are cytoplasmic. Residues 247–267 (AILLLTFVFASPLGIVLGHMA) traverse the membrane as a helical segment. Residues 268-273 (KSAGQK) are Extracellular-facing. Residues 274–294 (VTCLINAVSIGTLLFIGCEIL) traverse the membrane as a helical segment. Residues 295-310 (LNEIKQNISRKVRLCK) are Cytoplasmic-facing. Residues 311–331 (WLSFCFSCLIAFALISFTTSM) form a helical membrane-spanning segment. Residues 332–358 (APHTHGDIDTHVHVHHHDHDHDHGHNH) lie on the Extracellular side of the membrane.

Belongs to the ZIP transporter (TC 2.A.5) family. In terms of assembly, homodimer.

The protein resides in the plastid. The protein localises to the apicoplast. It localises to the cell membrane. The enzyme catalyses Zn(2+)(in) = Zn(2+)(out). The catalysed reaction is Fe(2+)(in) = Fe(2+)(out). Transporter for the divalent zinc cation. Mediates the influx of zinc into cells from extracellular space. Can transport divalent iron ions. Does not transport manganese and cadmium cations. The sequence is that of Zinc transporter ZIP1 from Plasmodium falciparum (isolate 3D7).